A 142-amino-acid chain; its full sequence is Universal stress protein C (142 aa).

This sequence belongs to the universal stress protein A family.

The protein localises to the cytoplasm. Functionally, required for resistance to DNA-damaging agents. The chain is Universal stress protein C (uspC) from Escherichia coli O157:H7.